Reading from the N-terminus, the 504-residue chain is Serine O-succinyltransferase (504 aa).

The N-terminal 26 residues, 1–26 (MLRASSKRLQLSWQVFRRFQSSNPQL), are a transit peptide targeting the mitochondrion. The disordered stretch occupies residues 49–70 (QACPNSVDPSASITSPSLSSGP). Low complexity predominate over residues 57–70 (PSASITSPSLSSGP). Residues 117-395 (NAILLHTGLS…SAEEIIKLNE (279 aa)) form the AB hydrolase-1 domain. The tract at residues 124–127 (GLSA) is important for substrate specificity. Ser221 serves as the catalytic Nucleophile. Residue Arg290 participates in substrate binding. Active-site residues include Asp443 and His480. Substrate is bound at residue Asp481.

The protein belongs to the AB hydrolase superfamily. MetX family.

The protein localises to the mitochondrion. The catalysed reaction is succinyl-CoA + L-serine = O-succinyl-L-serine + CoA. Its pathway is amino-acid biosynthesis; L-cysteine biosynthesis; L-cysteine from L-serine: step 1/2. Its function is as follows. Transfers a succinyl group from succinyl-CoA to L-serine, forming succinyl-L-serine. Also has weak serine acetyl transferase activity and homoserine succinyl transferase activity. This is Serine O-succinyltransferase from Schizosaccharomyces pombe (strain 972 / ATCC 24843) (Fission yeast).